The chain runs to 46 residues: KECMADGTVCYIHNHNDCCGSCLCPNGPLARPWEMLVGNCKCGPKA.

Intrachain disulfides connect C3–C19, C10–C22, C18–C42, and C24–C40. Positions 31–33 are keys region for toxin activity; sequence RPW.

This sequence belongs to the neurotoxin 16 (SFI) family. As to expression, expressed by the venom gland.

The protein localises to the secreted. Functionally, insecticidal toxin. It inhibits insect voltage-gated sodium channels (Nav) by partially blocking the channel pore in DUM neurons from the American cockroach, not by acting as a gating modifier. The inhibition is only partially reversible after prolonged washout. In vivo, the toxin causes flaccid paralysis followed by death when injected into Heliothis virescens larvae. It also causes uncoordinated movements followed by full paralysis to sheep blowflies (Lucilia cuprina). When the toxin is fused to snowdrop lectin, it is orally active against larvae of the tomato moth (Laconobia oleracea), the rice brown planthopper (Nilaparvata lugens), and the peach-potato aphid (Myzus persicae). The polypeptide is Mu-segestritoxin-Sf1h (Segestria florentina (Tube-web spider)).